Consider the following 156-residue polypeptide: S-ribosylhomocysteine lyase (156 aa).

The Fe cation site is built by histidine 56, histidine 60, and cysteine 123.

The protein belongs to the LuxS family. As to quaternary structure, homodimer. The cofactor is Fe cation.

It carries out the reaction S-(5-deoxy-D-ribos-5-yl)-L-homocysteine = (S)-4,5-dihydroxypentane-2,3-dione + L-homocysteine. Its function is as follows. Involved in the synthesis of autoinducer 2 (AI-2) which is secreted by bacteria and is used to communicate both the cell density and the metabolic potential of the environment. The regulation of gene expression in response to changes in cell density is called quorum sensing. Catalyzes the transformation of S-ribosylhomocysteine (RHC) to homocysteine (HC) and 4,5-dihydroxy-2,3-pentadione (DPD). This is S-ribosylhomocysteine lyase from Staphylococcus saprophyticus subsp. saprophyticus (strain ATCC 15305 / DSM 20229 / NCIMB 8711 / NCTC 7292 / S-41).